The chain runs to 81 residues: Small cysteine-rich protein 1 2 (81 aa).

Positions 1 to 19 (MGVNFNICLLLLLVATISS) are cleaved as a signal peptide. A propeptide spanning residues 20–39 (QPLKATEKDDSTDENPFGIY) is cleaved from the precursor.

It belongs to the Cnidaria small cysteine-rich protein (SCRiP) family. alpha subfamily. The basic myotoxic domain of rattlesnake crotamine toxins (with 6 Cys residues) has been detected in this protein. However, this protein contains 2 additional Cys at the C-terminal region. Hence, this protein may contain 4 disulfide bonds instead of the 3 suggested by the myotoxin domain.

Its subcellular location is the secreted. The protein resides in the nematocyst. Functionally, induces neurotoxic symptoms on zebrafish. Has also been claimed to be implied in calcification, but tests on homolog proteins suggest that proteins of this family have a neurotoxic function and not a calcification function. The chain is Small cysteine-rich protein 1 2 from Montipora capitata (Rice coral).